Consider the following 690-residue polypeptide: Polyribonucleotide nucleotidyltransferase (690 aa).

2 residues coordinate Mg(2+): D483 and D489. One can recognise a KH domain in the interval P550 to I609. An S1 motif domain is found at N619–K686.

Belongs to the polyribonucleotide nucleotidyltransferase family. The cofactor is Mg(2+).

It localises to the cytoplasm. The catalysed reaction is RNA(n+1) + phosphate = RNA(n) + a ribonucleoside 5'-diphosphate. Functionally, involved in mRNA degradation. Catalyzes the phosphorolysis of single-stranded polyribonucleotides processively in the 3'- to 5'-direction. This Pelagibacter ubique (strain HTCC1062) protein is Polyribonucleotide nucleotidyltransferase.